The chain runs to 255 residues: Pimeloyl-[acyl-carrier protein] methyl ester esterase (255 aa).

One can recognise an AB hydrolase-1 domain in the interval 16–241 (LVLVHGWGMN…QSSHAPFMTE (226 aa)). Substrate-binding positions include tryptophan 22, 82-83 (SL), and 143-147 (FMALQ). Serine 82 serves as the catalytic Nucleophile. Residues aspartate 207 and histidine 235 contribute to the active site. Residue histidine 235 coordinates substrate.

This sequence belongs to the AB hydrolase superfamily. Carboxylesterase BioH family. As to quaternary structure, monomer.

The protein resides in the cytoplasm. It carries out the reaction 6-carboxyhexanoyl-[ACP] methyl ester + H2O = 6-carboxyhexanoyl-[ACP] + methanol + H(+). It participates in cofactor biosynthesis; biotin biosynthesis. The physiological role of BioH is to remove the methyl group introduced by BioC when the pimeloyl moiety is complete. It allows to synthesize pimeloyl-ACP via the fatty acid synthetic pathway through the hydrolysis of the ester bonds of pimeloyl-ACP esters. The chain is Pimeloyl-[acyl-carrier protein] methyl ester esterase from Vibrio cholerae serotype O1 (strain ATCC 39315 / El Tor Inaba N16961).